We begin with the raw amino-acid sequence, 306 residues long: Pantothenate kinase (306 aa).

Residue 91 to 98 (GSVAVGKS) participates in ATP binding.

The protein belongs to the prokaryotic pantothenate kinase family.

Its subcellular location is the cytoplasm. It catalyses the reaction (R)-pantothenate + ATP = (R)-4'-phosphopantothenate + ADP + H(+). The protein operates within cofactor biosynthesis; coenzyme A biosynthesis; CoA from (R)-pantothenate: step 1/5. The sequence is that of Pantothenate kinase from Streptococcus pneumoniae serotype 2 (strain D39 / NCTC 7466).